A 494-amino-acid polypeptide reads, in one-letter code: Glycerol kinase (494 aa).

Thr13 is a binding site for ADP. Positions 13, 14, and 15 each coordinate ATP. Thr13 lines the sn-glycerol 3-phosphate pocket. Arg17 provides a ligand contact to ADP. Sn-glycerol 3-phosphate contacts are provided by Arg83, Glu84, Tyr135, and Asp244. Arg83, Glu84, Tyr135, Asp244, and Gln245 together coordinate glycerol. Thr266 and Gly309 together coordinate ADP. The ATP site is built by Thr266, Gly309, Gln313, and Gly410. ADP is bound by residues Gly410 and Asn414.

It belongs to the FGGY kinase family.

The enzyme catalyses glycerol + ATP = sn-glycerol 3-phosphate + ADP + H(+). It functions in the pathway polyol metabolism; glycerol degradation via glycerol kinase pathway; sn-glycerol 3-phosphate from glycerol: step 1/1. With respect to regulation, inhibited by fructose 1,6-bisphosphate (FBP). Functionally, key enzyme in the regulation of glycerol uptake and metabolism. Catalyzes the phosphorylation of glycerol to yield sn-glycerol 3-phosphate. The polypeptide is Glycerol kinase (Shewanella sp. (strain ANA-3)).